A 201-amino-acid polypeptide reads, in one-letter code: Small ribosomal subunit protein uS4c (201 aa).

The disordered stretch occupies residues 17–44 (ALPGLTNKKPRTGSDLRNQSRSGKKSQY). In terms of domain architecture, S4 RNA-binding spans 89-149 (MRLDNILFRL…DEQKSRALIQ (61 aa)).

This sequence belongs to the universal ribosomal protein uS4 family. In terms of assembly, part of the 30S ribosomal subunit. Contacts protein S5. The interaction surface between S4 and S5 is involved in control of translational fidelity.

Its subcellular location is the plastid. The protein resides in the chloroplast. One of the primary rRNA binding proteins, it binds directly to 16S rRNA where it nucleates assembly of the body of the 30S subunit. Functionally, with S5 and S12 plays an important role in translational accuracy. The sequence is that of Small ribosomal subunit protein uS4c (rps4) from Solanum bulbocastanum (Wild potato).